Reading from the N-terminus, the 488-residue chain is Poly(3-hydroxybutyrate) depolymerase (488 aa).

The first 27 residues, 1–27 (MVRRLWRRIAGWLAACVAILCAFPLHA), serve as a signal peptide directing secretion. Ser-166 serves as the catalytic Charge relay system. One can recognise a Fibronectin type-III domain in the interval 346–428 (APTGLAVTAT…AAVSATTKSA (83 aa)).

This sequence belongs to the AB hydrolase superfamily. Lipase family.

The protein resides in the secreted. It carries out the reaction [(3R)-hydroxybutanoate](n) + H2O = [(3R)-hydroxybutanoate](n-2) + (3R)-hydroxybutanoate dimer + H(+). The catalysed reaction is [(3R)-hydroxybutanoate](n) + H2O = [(3R)-hydroxybutanoate](n-3) + (3R)-hydroxybutanoate trimer + H(+). The enzyme catalyses [(3R)-hydroxybutanoate](n) + H2O = [(3R)-hydroxybutanoate](n-1) + (R)-3-hydroxybutanoate + H(+). It catalyses the reaction [(3R)-hydroxybutanoate](n) + H2O = [(3R)-hydroxybutanoate](n-5) + (3R)-hydroxybutanoate pentamer + H(+). It carries out the reaction [(3R)-hydroxybutanoate](n) + H2O = [(3R)-hydroxybutanoate](n-4) + (3R)-hydroxybutanoate tetramer + H(+). Its function is as follows. This protein degrades water-insoluble and water-soluble PHB to monomeric D(-)-3-hydroxybutyrate. The protein is Poly(3-hydroxybutyrate) depolymerase of Ralstonia pickettii (Burkholderia pickettii).